A 129-amino-acid chain; its full sequence is Protein LLP homolog (129 aa).

The segment covering Met-1–Asn-21 has biased composition (basic residues). The interval Met-1–Ser-27 is disordered. Glycyl lysine isopeptide (Lys-Gly) (interchain with G-Cter in SUMO2) cross-links involve residues Lys-67 and Lys-74. Residues Arg-100 to Lys-122 are compositionally biased toward basic residues. The segment at Arg-100–Trp-129 is disordered.

This sequence belongs to the learning-associated protein family. Interacts with CTCF, MYO1C and with the transcriptional machinery, including RNA polymerase II and TBP.

Its subcellular location is the nucleus. The protein localises to the nucleolus. The protein resides in the chromosome. In hippocampal neurons, regulates dendritic and spine growth and synaptic transmission. This is Protein LLP homolog (LLPH) from Homo sapiens (Human).